The following is a 338-amino-acid chain: Putative transposase for insertion sequence element IS4SA (338 aa).

This sequence belongs to the transposase 11 family.

The polypeptide is Putative transposase for insertion sequence element IS4SA (Synechocystis sp. (strain ATCC 27184 / PCC 6803 / Kazusa)).